The following is a 183-amino-acid chain: RNA pyrophosphohydrolase (183 aa).

One can recognise a Nudix hydrolase domain in the interval 6-149 (GYRPNVGIIL…KREVYRLALE (144 aa)). The short motif at 38–59 (GGINAGETPEQAMFRELEEEVG) is the Nudix box element.

Belongs to the Nudix hydrolase family. RppH subfamily. The cofactor is a divalent metal cation.

In terms of biological role, accelerates the degradation of transcripts by removing pyrophosphate from the 5'-end of triphosphorylated RNA, leading to a more labile monophosphorylated state that can stimulate subsequent ribonuclease cleavage. The sequence is that of RNA pyrophosphohydrolase from Thiobacillus denitrificans (strain ATCC 25259 / T1).